We begin with the raw amino-acid sequence, 290 residues long: Pirin (290 aa).

Positions 56, 58, 101, and 103 each coordinate Fe cation.

Belongs to the pirin family. In terms of assembly, may interact with NF1/CTF1. Interacts with BCL3. Identified in a complex comprised of PIR, BLC3, NFKB1 and target DNA. Fe cation serves as cofactor. Weakly expressed in bone marrow.

Its subcellular location is the nucleus. The protein localises to the cytoplasm. It catalyses the reaction quercetin + O2 = 2-(3,4-dihydroxybenzoyloxy)-4,6-dihydroxybenzoate + CO. It participates in flavonoid metabolism; quercetin degradation. Transcriptional coregulator of NF-kappa-B which facilitates binding of NF-kappa-B proteins to target kappa-B genes in a redox-state-dependent manner. May be required for efficient terminal myeloid maturation of hematopoietic cells. Has quercetin 2,3-dioxygenase activity (in vitro). This chain is Pirin (Pir), found in Mus musculus (Mouse).